Reading from the N-terminus, the 227-residue chain is Small ribosomal subunit protein uS3 (227 aa).

In terms of domain architecture, KH type-2 spans 39 to 108; sequence IRKFIEERYK…EVIVNVDEVK (70 aa).

The protein belongs to the universal ribosomal protein uS3 family. In terms of assembly, part of the 30S ribosomal subunit. Forms a tight complex with proteins S10 and S14.

Binds the lower part of the 30S subunit head. Binds mRNA in the 70S ribosome, positioning it for translation. This Sulfurihydrogenibium sp. (strain YO3AOP1) protein is Small ribosomal subunit protein uS3.